A 102-amino-acid chain; its full sequence is Large ribosomal subunit protein mL63 (102 aa).

It belongs to the mitochondrion-specific ribosomal protein mL63 family.

The protein resides in the mitochondrion. This is Large ribosomal subunit protein mL63 (MRPL57) from Bos taurus (Bovine).